Reading from the N-terminus, the 264-residue chain is Ribosomal protein L11 methyltransferase (264 aa).

4 residues coordinate S-adenosyl-L-methionine: Thr-116, Gly-137, Asp-159, and Asn-200.

The protein belongs to the methyltransferase superfamily. PrmA family.

It is found in the cytoplasm. It carries out the reaction L-lysyl-[protein] + 3 S-adenosyl-L-methionine = N(6),N(6),N(6)-trimethyl-L-lysyl-[protein] + 3 S-adenosyl-L-homocysteine + 3 H(+). In terms of biological role, methylates ribosomal protein L11. This Thermotoga neapolitana protein is Ribosomal protein L11 methyltransferase.